Consider the following 61-residue polypeptide: Japonicin-1CDYa (61 aa).

Residues 1-22 form the signal peptide; the sequence is MFTLKKSLLLLFFLGVINVSLC. Positions 23 to 45 are excised as a propeptide; the sequence is EEERDADEEERRDDPEERDVEVE. The cysteines at positions 55 and 61 are disulfide-linked.

Belongs to the frog skin active peptide (FSAP) family. Brevinin subfamily. Expressed by the skin glands.

It is found in the secreted. Antimicrobial peptide. Has low activity against the Gram-positive bacterium S.aureus (MIC&gt;100 uM) and the Gram-negative bacterium E.coli (MIC=25 uM). Lacks hemolytic activity against human erythrocytes. This Rana dybowskii (Dybovsky's frog) protein is Japonicin-1CDYa.